Consider the following 273-residue polypeptide: Dermonecrotic toxin LhSicTox-alphaIA2ai (273 aa).

His-5 is a catalytic residue. Mg(2+) is bound by residues Glu-25 and Asp-27. His-41 acts as the Nucleophile in catalysis. Cystine bridges form between Cys-45-Cys-51 and Cys-47-Cys-190. Asp-85 is a binding site for Mg(2+).

The protein belongs to the arthropod phospholipase D family. Class II subfamily. Mg(2+) is required as a cofactor. Expressed by the venom gland.

Its subcellular location is the secreted. It catalyses the reaction an N-(acyl)-sphingosylphosphocholine = an N-(acyl)-sphingosyl-1,3-cyclic phosphate + choline. It carries out the reaction an N-(acyl)-sphingosylphosphoethanolamine = an N-(acyl)-sphingosyl-1,3-cyclic phosphate + ethanolamine. The catalysed reaction is a 1-acyl-sn-glycero-3-phosphocholine = a 1-acyl-sn-glycero-2,3-cyclic phosphate + choline. The enzyme catalyses a 1-acyl-sn-glycero-3-phosphoethanolamine = a 1-acyl-sn-glycero-2,3-cyclic phosphate + ethanolamine. Dermonecrotic toxins cleave the phosphodiester linkage between the phosphate and headgroup of certain phospholipids (sphingolipid and lysolipid substrates), forming an alcohol (often choline) and a cyclic phosphate. This toxin acts on sphingomyelin (SM). It may also act on ceramide phosphoethanolamine (CPE), lysophosphatidylcholine (LPC) and lysophosphatidylethanolamine (LPE), but not on lysophosphatidylserine (LPS), and lysophosphatidylglycerol (LPG). It acts by transphosphatidylation, releasing exclusively cyclic phosphate products as second products. Induces dermonecrosis, hemolysis, increased vascular permeability, edema, inflammatory response, and platelet aggregation. The protein is Dermonecrotic toxin LhSicTox-alphaIA2ai of Loxosceles hirsuta (Recluse spider).